The primary structure comprises 515 residues: Protein disulfide-isomerase (515 aa).

The signal sequence occupies residues 1 to 22 (MAVVRVRAIVALLCLVAALGLA). 2 consecutive Thioredoxin domains span residues 23-139 (EPLE…KRTG) and 351-480 (FLEG…SGGQ). Active-site nucleophile residues include Cys58, Cys61, Cys402, and Cys405. 2 disulfide bridges follow: Cys58/Cys61 and Cys402/Cys405. Positions 477 to 515 (SGGQDGAAADDDLEDLETDEETDLEEGDDDEQKIQKDEL) are disordered. Acidic residues predominate over residues 484 to 507 (AADDDLEDLETDEETDLEEGDDDE). The Prevents secretion from ER signature appears at 512–515 (KDEL).

This sequence belongs to the protein disulfide isomerase family. As to quaternary structure, heterodimer; heterodimerizes with the protein microsomal triglyceride transfer MTTP. Homodimer. Monomers and homotetramers may also occur. Also constitutes the structural subunit of prolyl 4-hydroxylase. Stabilizes this enzyme and retains it in the ER without contributing to the catalytic activity. Binds UBQLN1.

Its subcellular location is the endoplasmic reticulum. It is found in the endoplasmic reticulum lumen. The protein resides in the cell membrane. It catalyses the reaction Catalyzes the rearrangement of -S-S- bonds in proteins.. This multifunctional protein catalyzes the formation, breakage and rearrangement of disulfide bonds. At the cell surface, seems to act as a reductase that cleaves disulfide bonds of proteins attached to the cell. May therefore cause structural modifications of exofacial proteins. Inside the cell, seems to form/rearrange disulfide bonds of nascent proteins. At high concentrations, functions as a chaperone that inhibits aggregation of misfolded proteins. At low concentrations, facilitates aggregation (anti-chaperone activity). Also acts a structural subunit of various enzymes such as prolyl 4-hydroxylase. This Gallus gallus (Chicken) protein is Protein disulfide-isomerase (P4HB).